A 603-amino-acid polypeptide reads, in one-letter code: Prosaposin receptor GPR37 (603 aa).

The first 26 residues, 1 to 26, serve as a signal peptide directing secretion; sequence MPAPGAPLSRTSRLLLLLLFKVSVSA. Topologically, residues 27–255 are extracellular; that stretch reads ALSFVPEPRN…QESYGAYAVM (229 aa). A glycan (N-linked (GlcNAc...) asparagine) is linked at Asn-36. The interval 39–232 is disordered; the sequence is CLGESCSPLI…GGPRRGNSTN (194 aa). 3 stretches are compositionally biased toward basic and acidic residues: residues 51 to 79, 145 to 158, and 165 to 175; these read RSRD…EAEV, TSER…RDEI, and HSVKTEPEPRD. Asn-212 and Asn-229 each carry an N-linked (GlcNAc...) asparagine glycan. Residues 256–276 traverse the membrane as a helical segment; sequence CLSVVIFGTGIIGNLAVMCIV. Residues 277-289 are Cytoplasmic-facing; it reads CHNYYMRSISNSL. A helical transmembrane segment spans residues 290–310; it reads LANLAFWDFLIIFFCLPLVIF. At 311–325 the chain is on the extracellular side; the sequence is HELTKKWLLEDFSCK. Residues Cys-324 and Cys-409 are joined by a disulfide bond. A helical membrane pass occupies residues 326 to 346; it reads IVPYIEVASLGVTTFTLCALC. Residues 347–369 are Cytoplasmic-facing; it reads IDRFRAATNVQMYYEMIENCSST. Residues 370 to 390 traverse the membrane as a helical segment; it reads TAKLAVIWVGALLLALPEVVL. Residues 391–433 lie on the Extracellular side of the membrane; it reads RQLSKEDLGFSGQAPAERCVIKISPDLPDTIYVLALTYDGARL. Residues 434–454 form a helical membrane-spanning segment; sequence WWYFGCYFCLPTLFTITCSLV. Topologically, residues 455-483 are cytoplasmic; sequence TARKIRKAEKASTRGNKRQIHLESQMNCT. Residues 484 to 504 form a helical membrane-spanning segment; it reads VVALTILYGFCIIPENICNIV. The Extracellular segment spans residues 505 to 521; sequence TAYMATGVSQQTMDLLN. Residues 522-542 traverse the membrane as a helical segment; it reads IISQFLLFFKSCVTPVLLFCL. Over 543-603 the chain is Cytoplasmic; the sequence is CRPFSRAFME…STFASVGTHC (61 aa).

The protein belongs to the G-protein coupled receptor 1 family. As to quaternary structure, forms a complex with PRKN, STUB1 and HSP70. The amount of STUB1 in the complex increases during ER stress. STUB1 promotes the dissociation of HSP70 from PRKN, thus facilitating PRKN-mediated GPR37 ubiquitination. Interacts with PACRG. The N-terminus is cleaved by ADAM10 metalloproteinase; mediating limited proteolysis leading to the release of receptor ectodomain by shedding. In addition, cleaved by FURIN between Arg-53 and Asp-54. In terms of processing, ubiquitinated by PRKN in the presence of UBE2E1 and UBE2L3 in the endoplasmic reticulum. The unfolded form is specifically ubiquitinated by SYVN1, which promotes its proteasomal degradation and prevents neuronal cell death. Highly expressed in the brain. High levels of expression were seen in fiber tracts such as the corpus callosum, anterior commissure, fornix, internal capsule, cerebral peduncles, and stria terminalis. Additionally, moderate levels of expression were seen in the pyramidal tracts and cerebellar peduncles, as well as in the spinal tract of the trigeminal nerve and the spinal fasciculi.

The protein resides in the cell projection. It is found in the dendrite. The protein localises to the synapse. Its subcellular location is the cell membrane. It localises to the endoplasmic reticulum membrane. G-protein-coupled receptor that plays a role in several physiological pathways such as resolution of inflammatory pain and oligodendrocyte differentiation. Acts as a receptor for several ligands including prosaposin, osteocalcin or neuroprotectin D1. Ligand binding induces endocytosis, followed by an ERK phosphorylation cascade. Acts as a receptor for osteocalcin (OCN) to regulate oligodendrocyte differentiation and central nervous system myelination. Mechanistically, plays a negative role in oligodendrocyte differentiation and myelination during development via activation of the ERK1/2 signaling pathway. Therefore, regulates the stability of myelin or resistance of myelin itself to demyelination. Upon activation by neuroprotectin D1 (NPD1), promotes the activation of phagocytosis in macrophages as well as the shift in cytokine release toward an anti-inflammatory profile, and thus helps to reverse inflammatory pain. In addition, the increased macrophage phagocytosis mediates protection against sepsis upon pathogen infection. Additionally, extracellular vesicles derived from efferocyte express prosaposin, which binds to macrophage GPR37 to increase expression of the efferocytosis receptor TIM4 via an ERK-AP1-dependent signaling axis, leading to increased macrophage efferocytosis efficiency and accelerated resolution of inflammation. May also act as a maturation factor of LRP6, protecting LRP6 from the endoplasmic reticulum (ER)-associated protein degradation (ERAD) and thereby promoting the Wnt/beta-catenin signaling pathway. The chain is Prosaposin receptor GPR37 (Gpr37) from Rattus norvegicus (Rat).